A 236-amino-acid polypeptide reads, in one-letter code: uncharacterized protein (236 aa).

The NADP(+) site is built by Asp-22, Asn-49, and Lys-82. Residues Ser-100 and Tyr-114 each act as proton donor in the active site. Residues Tyr-114 and Lys-118 each contribute to the NADP(+) site. The active-site Lowers pKa of active site Tyr is the Lys-118.

This sequence belongs to the short-chain dehydrogenases/reductases (SDR) family.

It is found in the cytoplasm. The protein localises to the nucleus. This is an uncharacterized protein from Schizosaccharomyces pombe (strain 972 / ATCC 24843) (Fission yeast).